Here is a 137-residue protein sequence, read N- to C-terminus: Large ribosomal subunit protein bL17 (137 aa).

Belongs to the bacterial ribosomal protein bL17 family. As to quaternary structure, part of the 50S ribosomal subunit. Contacts protein L32.

In Caulobacter sp. (strain K31), this protein is Large ribosomal subunit protein bL17.